We begin with the raw amino-acid sequence, 757 residues long: MDVNPTLLFLKVPAQNAISTTFPYTGDPPYSHGTGTGYTMDTVNRTHQYSERGRWTKNTETGAPQLNPIDGPLPEDNEPSGYAQTDCVLEAMAFLEESHPGIFENSCIETMEVVQQTRVDKLTQGRQTYDWTLNRNQPAATALANTIEVFRSNGLIANESGRLIDFLKDVMESMDRDEVEVTTHFQRKRRVRDNVTKKMVTQRTIGKKKHKLDKRSYLIRALTLNTMTKDAERGKLKRRAIATPGMQIRGFVYFVETLARSICEKLEQSGLPVGGNEKKAKLANVVRKMMTNSQDTEISFTITGDNTKWNENQNPRMFLAMITYITKNQPEWFRNILSIAPIMFSNKMARLGKGYMFESKSMKLRTQIPAEMLANIDLKYFNDSTKKKIEKIRPLLIDGTASLSPGMMMGMFNMLSTVLGVSILNLGQKRYTKTTYWWDGLQSSDDFALIVNAPNYAGIQAGVDRFYRTCKLLGINMSKKKSYINRTGTFEFTSFFYRYGFVANFSMELPSFGVSGVNESADMSIGVTVIKNNMINNDLGPATAQMALQLFIKDYRYTYRCHRGDTQIQTRRSFEIKKLWDQTRSKAGLLVSDGGPNLYNIRNLHIPEVCLKWELMDEDYQGRLCNPLNPFVSHKEIESVNNAVIMPAHGPAKNMEYDAVATTHSWVPKRNRSILNTSQRGVLEDEQMYQRCCNLFEKFFPSSSYRRPVGISSMVEAMVSRARIDARIDFESGRIKKEEFAEIMKICSTIEDLRRQK.

The segment at 50–82 is disordered; that stretch reads SERGRWTKNTETGAPQLNPIDGPLPEDNEPSGY. Short sequence motifs (nuclear localization signal) lie at residues 187–195 and 203–216; these read RKRRVRDNV and RTIGKKKHKLDKRS. The interval 249–256 is promoter-binding site; it reads RGFVYFVE. Residues 286–483 enclose the RdRp catalytic domain; the sequence is VRKMMTNSQD…GINMSKKKSY (198 aa).

It belongs to the influenza viruses polymerase PB1 family. Influenza RNA polymerase is composed of three subunits: PB1, PB2 and PA. Interacts (via N-terminus) with PA (via C-terminus). Interacts (via C-terminus) with PB2 (via N-terminus); this interaction is essential for transcription initiation. Interacts (via C-terminus) with human PKP2 (via N-terminus); the interaction competitively inhibits the interaction between the RNA polymerase subunits PB1 and PB2. In terms of processing, phosphorylated by host PRKCA.

It is found in the host nucleus. Its subcellular location is the host cytoplasm. The enzyme catalyses RNA(n) + a ribonucleoside 5'-triphosphate = RNA(n+1) + diphosphate. Its function is as follows. RNA-dependent RNA polymerase which is responsible for replication and transcription of virus RNA segments. The transcription of viral mRNAs occurs by a unique mechanism called cap-snatching. 5' methylated caps of cellular mRNAs are cleaved after 10-13 nucleotides by PA. In turn, these short capped RNAs are used as primers by PB1 for transcription of viral mRNAs. During virus replication, PB1 initiates RNA synthesis and copy vRNA into complementary RNA (cRNA) which in turn serves as a template for the production of more vRNAs. The sequence is that of RNA-directed RNA polymerase catalytic subunit from Aves (Human).